A 506-amino-acid polypeptide reads, in one-letter code: Galactose/methyl galactoside import ATP-binding protein MglA (506 aa).

ABC transporter domains are found at residues 14 to 249 (LTMT…VGRE) and 260 to 506 (TPKE…AKYL). Residue 46–53 (GENGAGKS) coordinates ATP.

This sequence belongs to the ABC transporter superfamily. Galactose/methyl galactoside importer (TC 3.A.1.2.3) family. The complex is composed of one ATP-binding protein (MglA), two transmembrane proteins (MglC) and a solute-binding protein (MglB).

Its subcellular location is the cell inner membrane. The enzyme catalyses D-galactose(out) + ATP + H2O = D-galactose(in) + ADP + phosphate + H(+). It carries out the reaction methyl beta-D-galactoside(out) + ATP + H2O = methyl beta-D-galactoside(in) + ADP + phosphate + H(+). Functionally, part of the ABC transporter complex MglABC involved in galactose/methyl galactoside import. Responsible for energy coupling to the transport system. The protein is Galactose/methyl galactoside import ATP-binding protein MglA of Pasteurella multocida (strain Pm70).